The chain runs to 213 residues: uncharacterized protein (213 aa).

This is an uncharacterized protein from Acanthamoeba polyphaga mimivirus (APMV).